The primary structure comprises 636 residues: p-hydroxybenzoate-m-hydroxylase (636 aa).

FAD is bound by residues 11-40 (DIVIVGAGPVGILLSLCMSRWGYKVKHIDN), 242-244 (RLY), Y290, and D311. Residues 12–33 (IVIVGAGPVGILLSLCMSRWGY) form a helical membrane-spanning segment. The N-linked (GlcNAc...) asparagine glycan is linked to N573.

This sequence belongs to the PheA/TfdB FAD monooxygenase family. The cofactor is FAD.

The protein localises to the membrane. It catalyses the reaction 4-hydroxybenzoate + NADH + O2 + H(+) = 3,4-dihydroxybenzoate + NAD(+) + H2O. The enzyme catalyses 4-hydroxybenzoate + NADPH + O2 + H(+) = 3,4-dihydroxybenzoate + NADP(+) + H2O. Functionally, FAD-dependent monooxygenase; part of the benzoic acid degradation pathway also known as the protocatechuic acid pathway. Benzoic acid debradation begins with the conversion of benzoic acid into 4-hydroxybenzoic acid through hydroxylation by the benzoate-4-monooxygenase bphA, and its partner NADPH-cytochrome P450 reductase cprA which act as a mediator in electron donation from NADPH. 4-Hydroxybenzoic acid is then converted into 3,4-dihydroxybenzoic acid (also called protocatechuic acid) by the p-hydroxybenzoate-m-hydroxylase phhA. Protocatechuic acid is converted into 3-carboxy-cis,cis-muconic acid by the intradiol ring-cleavage dioxygenase prcA, which is further metabolized through the 3-oxoadipate pathway to finally enter the tricarboxylic acid cycle (TCA). In Emericella nidulans (strain FGSC A4 / ATCC 38163 / CBS 112.46 / NRRL 194 / M139) (Aspergillus nidulans), this protein is p-hydroxybenzoate-m-hydroxylase.